The sequence spans 329 residues: 7,8-didemethyl-8-hydroxy-5-deazariboflavin synthase (329 aa).

The Radical SAM core domain occupies 6–244; sequence ITYTKNVFLP…EEISIQVAPN (239 aa). [4Fe-4S] cluster is bound by residues cysteine 20, cysteine 24, and cysteine 27.

This sequence belongs to the radical SAM superfamily. CofG family. As to quaternary structure, consists of two subunits, CofG and CofH. It depends on [4Fe-4S] cluster as a cofactor.

It catalyses the reaction 5-amino-5-(4-hydroxybenzyl)-6-(D-ribitylimino)-5,6-dihydrouracil + S-adenosyl-L-methionine = 7,8-didemethyl-8-hydroxy-5-deazariboflavin + 5'-deoxyadenosine + L-methionine + NH4(+) + H(+). The protein operates within cofactor biosynthesis; coenzyme F0 biosynthesis. In terms of biological role, catalyzes the radical-mediated synthesis of 7,8-didemethyl-8-hydroxy-5-deazariboflavin from 5-amino-5-(4-hydroxybenzyl)-6-(D-ribitylimino)-5,6-dihydrouracil. This is 7,8-didemethyl-8-hydroxy-5-deazariboflavin synthase from Methanoregula boonei (strain DSM 21154 / JCM 14090 / 6A8).